We begin with the raw amino-acid sequence, 217 residues long: ATP phosphoribosyltransferase (217 aa).

This sequence belongs to the ATP phosphoribosyltransferase family. Short subfamily. Heteromultimer composed of HisG and HisZ subunits.

Its subcellular location is the cytoplasm. It carries out the reaction 1-(5-phospho-beta-D-ribosyl)-ATP + diphosphate = 5-phospho-alpha-D-ribose 1-diphosphate + ATP. The protein operates within amino-acid biosynthesis; L-histidine biosynthesis; L-histidine from 5-phospho-alpha-D-ribose 1-diphosphate: step 1/9. Catalyzes the condensation of ATP and 5-phosphoribose 1-diphosphate to form N'-(5'-phosphoribosyl)-ATP (PR-ATP). Has a crucial role in the pathway because the rate of histidine biosynthesis seems to be controlled primarily by regulation of HisG enzymatic activity. The protein is ATP phosphoribosyltransferase of Prochlorococcus marinus (strain MIT 9313).